A 254-amino-acid chain; its full sequence is Cytochrome c oxidase subunit 2 (254 aa).

Residues 12–38 are Mitochondrial intermembrane-facing; sequence DAPEPWQICYQDSATKIMSGIDKLTGE. The chain crosses the membrane as a helical span at residues 39–59; that stretch reads IFYYETLLLIIVGWVLISAII. Residues 60-73 are Mitochondrial matrix-facing; it reads KYTKTELSYKYFNH. Residues 74–94 traverse the membrane as a helical segment; it reads GTLIEILWTCSPAFILIAISF. At 95-248 the chain is on the mitochondrial intermembrane side; that stretch reads PSFKLLYLMD…KYLEWLNIHL (154 aa). 6 residues coordinate Cu cation: His182, Cys217, Glu219, Cys221, His225, and Met228. Mg(2+) is bound at residue Glu219.

The protein belongs to the cytochrome c oxidase subunit 2 family. Component of the cytochrome c oxidase (complex IV, CIV), a multisubunit enzyme composed of a catalytic core of 3 subunits and several supernumerary subunits. The complex exists as a monomer or a dimer and forms supercomplexes (SCs) in the inner mitochondrial membrane with ubiquinol-cytochrome c oxidoreductase (cytochrome b-c1 complex, complex III, CIII). Requires Cu cation as cofactor.

It is found in the mitochondrion inner membrane. The enzyme catalyses 4 Fe(II)-[cytochrome c] + O2 + 8 H(+)(in) = 4 Fe(III)-[cytochrome c] + 2 H2O + 4 H(+)(out). Functionally, component of the cytochrome c oxidase, the last enzyme in the mitochondrial electron transport chain which drives oxidative phosphorylation. The respiratory chain contains 3 multisubunit complexes succinate dehydrogenase (complex II, CII), ubiquinol-cytochrome c oxidoreductase (cytochrome b-c1 complex, complex III, CIII) and cytochrome c oxidase (complex IV, CIV), that cooperate to transfer electrons derived from NADH and succinate to molecular oxygen, creating an electrochemical gradient over the inner membrane that drives transmembrane transport and the ATP synthase. Cytochrome c oxidase is the component of the respiratory chain that catalyzes the reduction of oxygen to water. Electrons originating from reduced cytochrome c in the intermembrane space (IMS) are transferred via the dinuclear copper A center (CU(A)) of subunit 2 and heme A of subunit 1 to the active site in subunit 1, a binuclear center (BNC) formed by heme A3 and copper B (CU(B)). The BNC reduces molecular oxygen to 2 water molecules using 4 electrons from cytochrome c in the IMS and 4 protons from the mitochondrial matrix. The polypeptide is Cytochrome c oxidase subunit 2 (Zancudomyces culisetae (Gut fungus)).